Reading from the N-terminus, the 82-residue chain is M-zodatoxin-Lt3b (82 aa).

The signal sequence occupies residues 1–22 (MKTYAVLLALVVAFVCIAESTG). Positions 23–61 (YPVEDLEDDELTELEAEALLEDLLEDLELEDLDYNEEAR) are excised as a propeptide. Positions 58 to 61 (EEAR) match the Processing quadruplet motif motif. Residue alanine 81 is modified to Alanine amide.

In terms of processing, cleavage of the propeptide depends on the processing quadruplet motif (XXXR, with at least one of X being E). As to expression, expressed by the venom gland.

Its subcellular location is the secreted. Functionally, it has antimicrobial activity against Gram-positive bacteria (A.globiformis VKM Ac-1112 (MIC=0.7 uM), and B.subtilis VKM B-501 (MIC=2.9 uM)), Gram-negative bacteria (E.coli DH5-alpha (MIC=23 uM), E.coli MH1 (MIC=28 uM), and P.aeruginosa PAO1 (MIC&gt;45 uM)), and yeasts (P.pastoris GS115 (MIC=23 uM), and S.cerevisiae Y190 (MIC=23 uM)). Does not have hemolytic against rabbit erythrocytes. Causes paralysis, but is not lethal when injected into insect (M.domestica) larvae. The chain is M-zodatoxin-Lt3b from Lachesana tarabaevi (Spider).